Reading from the N-terminus, the 313-residue chain is Small ribosomal subunit protein uS2 (313 aa).

Residue Ser2 is modified to N-acetylserine. 2 laminin-binding regions span residues 161 to 180 and 205 to 229; these read IPCN…MLAR and RDPE…EFQG. [DE]-W-[ST] repeat units lie at residues 230 to 232 and 245 to 247; these read EWS and DWS. The interval 242–313 is laminin-binding; that stretch reads EVADWSEGVA…DWGGTTSDWS (72 aa). Low complexity predominate over residues 262–274; sequence PATAAAAAAAAPP. Residues 262-313 form a disordered region; sequence PATAAAAAAAAPPVKTGEVFSEDWSTQPATDDWSTAPTAQASDWGGTTSDWS. [DE]-W-[ST] repeat units lie at residues 284-286, 293-295, and 311-313; these read DWS. Residues 284 to 313 show a composition bias toward polar residues; sequence DWSTQPATDDWSTAPTAQASDWGGTTSDWS.

It belongs to the universal ribosomal protein uS2 family. As to quaternary structure, monomer (37LRP) and homodimer (67LR). Component of the small ribosomal subunit. Mature ribosomes consist of a small (40S) and a large (60S) subunit. The 40S subunit contains about 33 different proteins and 1 molecule of RNA (18S). The 60S subunit contains about 49 different proteins and 3 molecules of RNA (28S, 5.8S and 5S). Interacts with rps21. Interacts with several laminins including at least lamb1. Interacts with mdk. Post-translationally, acylated. Acylation may be a prerequisite for conversion of the monomeric 37 kDa laminin receptor precursor (37LRP) to the mature dimeric 67 kDa laminin receptor (67LR), and may provide a mechanism for membrane association. In terms of processing, cleaved by stromelysin-3 (ST3) at the cell surface. Cleavage by stromelysin-3 may be a mechanism to alter cell-extracellular matrix interactions.

The protein localises to the cell membrane. The protein resides in the cytoplasm. It is found in the nucleus. Its function is as follows. Required for the assembly and/or stability of the 40S ribosomal subunit. Required for the processing of the 20S rRNA-precursor to mature 18S rRNA in a late step of the maturation of 40S ribosomal subunits. Also functions as a cell surface receptor for laminin. Plays a role in cell adhesion to the basement membrane and in the consequent activation of signaling transduction pathways. May play a role in cell fate determination and tissue morphogenesis. This is Small ribosomal subunit protein uS2 (rpsa) from Solea senegalensis (Senegalese sole).